A 355-amino-acid polypeptide reads, in one-letter code: Probable tRNA-dihydrouridine synthase 1 (355 aa).

FMN is bound by residues 48 to 50 (PLS) and Q102. C132 acts as the Proton donor in catalysis. FMN is bound by residues K171, 232–234 (NGD), and 256–257 (SR).

Belongs to the Dus family. Requires FMN as cofactor.

The enzyme catalyses a 5,6-dihydrouridine in tRNA + NAD(+) = a uridine in tRNA + NADH + H(+). The catalysed reaction is a 5,6-dihydrouridine in tRNA + NADP(+) = a uridine in tRNA + NADPH + H(+). Catalyzes the synthesis of 5,6-dihydrouridine (D), a modified base found in the D-loop of most tRNAs, via the reduction of the C5-C6 double bond in target uridines. In Synechocystis sp. (strain ATCC 27184 / PCC 6803 / Kazusa), this protein is Probable tRNA-dihydrouridine synthase 1 (dus1).